Here is a 186-residue protein sequence, read N- to C-terminus: Ribosome-recycling factor (186 aa).

This sequence belongs to the RRF family.

It is found in the cytoplasm. In terms of biological role, responsible for the release of ribosomes from messenger RNA at the termination of protein biosynthesis. May increase the efficiency of translation by recycling ribosomes from one round of translation to another. The protein is Ribosome-recycling factor of Allorhizobium ampelinum (strain ATCC BAA-846 / DSM 112012 / S4) (Agrobacterium vitis (strain S4)).